The sequence spans 486 residues: N-succinylglutamate 5-semialdehyde dehydrogenase (486 aa).

Residue 220 to 225 coordinates NAD(+); it reads GSSRTG. Residues Glu243 and Cys277 contribute to the active site.

Belongs to the aldehyde dehydrogenase family. AstD subfamily.

The enzyme catalyses N-succinyl-L-glutamate 5-semialdehyde + NAD(+) + H2O = N-succinyl-L-glutamate + NADH + 2 H(+). The protein operates within amino-acid degradation; L-arginine degradation via AST pathway; L-glutamate and succinate from L-arginine: step 4/5. In terms of biological role, catalyzes the NAD-dependent reduction of succinylglutamate semialdehyde into succinylglutamate. The protein is N-succinylglutamate 5-semialdehyde dehydrogenase of Shewanella piezotolerans (strain WP3 / JCM 13877).